A 443-amino-acid chain; its full sequence is Thymidine phosphorylase (443 aa).

Belongs to the thymidine/pyrimidine-nucleoside phosphorylase family. In terms of assembly, homodimer.

It catalyses the reaction thymidine + phosphate = 2-deoxy-alpha-D-ribose 1-phosphate + thymine. Its pathway is pyrimidine metabolism; dTMP biosynthesis via salvage pathway; dTMP from thymine: step 1/2. The enzymes which catalyze the reversible phosphorolysis of pyrimidine nucleosides are involved in the degradation of these compounds and in their utilization as carbon and energy sources, or in the rescue of pyrimidine bases for nucleotide synthesis. The sequence is that of Thymidine phosphorylase from Shewanella baltica (strain OS195).